A 600-amino-acid chain; its full sequence is Dihydroxy-acid dehydratase (600 aa).

D82 is a Mg(2+) binding site. C123 provides a ligand contact to [2Fe-2S] cluster. D124 and K125 together coordinate Mg(2+). K125 carries the N6-carboxylysine modification. C192 is a [2Fe-2S] cluster binding site. Residue E489 participates in Mg(2+) binding. The active-site Proton acceptor is S515.

The protein belongs to the IlvD/Edd family. Homodimer. Requires [2Fe-2S] cluster as cofactor. Mg(2+) is required as a cofactor.

It catalyses the reaction (2R)-2,3-dihydroxy-3-methylbutanoate = 3-methyl-2-oxobutanoate + H2O. The catalysed reaction is (2R,3R)-2,3-dihydroxy-3-methylpentanoate = (S)-3-methyl-2-oxopentanoate + H2O. Its pathway is amino-acid biosynthesis; L-isoleucine biosynthesis; L-isoleucine from 2-oxobutanoate: step 3/4. It participates in amino-acid biosynthesis; L-valine biosynthesis; L-valine from pyruvate: step 3/4. Functions in the biosynthesis of branched-chain amino acids. Catalyzes the dehydration of (2R,3R)-2,3-dihydroxy-3-methylpentanoate (2,3-dihydroxy-3-methylvalerate) into 2-oxo-3-methylpentanoate (2-oxo-3-methylvalerate) and of (2R)-2,3-dihydroxy-3-methylbutanoate (2,3-dihydroxyisovalerate) into 2-oxo-3-methylbutanoate (2-oxoisovalerate), the penultimate precursor to L-isoleucine and L-valine, respectively. The protein is Dihydroxy-acid dehydratase of Bacteroides thetaiotaomicron (strain ATCC 29148 / DSM 2079 / JCM 5827 / CCUG 10774 / NCTC 10582 / VPI-5482 / E50).